The sequence spans 743 residues: Ovocleidin-116 (743 aa).

A signal peptide spans 1-18 (MRATLFCLCLCLLGTVLP). Cys31 and Cys42 are disulfide-bonded. Asn62 carries N-linked (GlcNAc...) asparagine glycosylation. Positions 68–225 (KEEGDHQGTI…GTMGTGDSAI (158 aa)) are disordered. Polar residues predominate over residues 129–141 (DSNSVYPTSTSVE). The span at 169–179 (GPHGDGDGGNG) shows a compositional bias: gly residues. Residue Asn293 is glycosylated (N-linked (GlcNAc...) asparagine; partial). 6 disordered regions span residues 333–356 (GDSV…ATEI), 385–454 (SGKG…GPER), 505–534 (ARTQ…QQEV), 549–577 (RHRA…STGG), 628–649 (DPWV…TVAG), and 692–743 (SGVG…RQSL). Residues 402-420 (ATMTTRGGRGTASSGLTTG) are compositionally biased toward low complexity. The segment covering 421–431 (DCSTAASTPSR) has biased composition (polar residues). Residues 549 to 558 (RHRARVRPES) show a composition bias toward basic and acidic residues.

Belongs to the osteoregulin family. In terms of processing, asn-62 is fully glycosylated, whereas only less than 10% of Asn-293 seem to be glycosylated. As to expression, in the eggshell, expressed mainly in the palisade and mammillary layers. Expression also detected in the hypertrophic zone of the epiphyseal growth plate, and in cortical and medullary bone (at protein level). Highly expressed in uterus. Not detected in the proximal oviduct, liver, magnum, duodenum and kidney.

It localises to the secreted. The protein localises to the extracellular space. It is found in the extracellular matrix. In terms of biological role, major component of the eggshell matrix. May play an important role in the regulation of calcite growth during eggshell calcification. May also regulate the mineralization process in developing and growing bones. This is Ovocleidin-116 from Gallus gallus (Chicken).